The sequence spans 146 residues: Large ribosomal subunit protein uL13 (146 aa).

The protein belongs to the universal ribosomal protein uL13 family. In terms of assembly, part of the 50S ribosomal subunit.

Its function is as follows. This protein is one of the early assembly proteins of the 50S ribosomal subunit, although it is not seen to bind rRNA by itself. It is important during the early stages of 50S assembly. This chain is Large ribosomal subunit protein uL13, found in Sulfurisphaera tokodaii (strain DSM 16993 / JCM 10545 / NBRC 100140 / 7) (Sulfolobus tokodaii).